The chain runs to 299 residues: MRVIPLASESLGVRSLATFVEAGGLRILIDPGVALGPKRYGLPPAEVELKTLQQMRKKLQGYARKADIVTISHYHYDHHTPFFEGLYESSSEDYAREIYAGKILFIKHPTENINFSQRKRAWAFLKNAEAIAKKIEYADGRSFDLGGVTIEFSPAVPHGSEGSKLGFVVMVLIDDGSKRVIHASDIQLLNRRSVKWIIEKNPDLLITGGPPTYLGPRATGSWETGVKNLNEIILETNAEVILDHHIVRDKRYPEFFDELEKRPKTFAGYLKVEDRPLEAYRRELHKIEKGEGAEVPFRL.

The protein belongs to the UPF0282 family.

This is UPF0282 protein TK1681 from Thermococcus kodakarensis (strain ATCC BAA-918 / JCM 12380 / KOD1) (Pyrococcus kodakaraensis (strain KOD1)).